A 246-amino-acid chain; its full sequence is Putative outer membrane protein YiaT (246 aa).

The signal sequence occupies residues 1-21 (MLINRNIVALFALPFMASATA).

This sequence belongs to the MipA/OmpV family.

The protein localises to the cell outer membrane. The protein is Putative outer membrane protein YiaT (yiaT) of Escherichia coli O157:H7.